The chain runs to 615 residues: Probable ATP-citrate synthase subunit 1 (615 aa).

Residues 221 to 241 (LIRF…EVGG) and 272 to 298 (FKTE…KNQA) each bind ATP. Mg(2+) is bound at residue glutamate 238. Catalysis depends on histidine 280, which acts as the Tele-phosphohistidine intermediate. Residue 299–309 (MREAGIYVPET) coordinates CoA. Residue serine 359 is modified to Phosphoserine.

It belongs to the succinate/malate CoA ligase alpha subunit family. In terms of assembly, composed of two subunits.

The protein resides in the cytoplasm. It catalyses the reaction oxaloacetate + acetyl-CoA + ADP + phosphate = citrate + ATP + CoA. Its function is as follows. Catalyzes the formation of cytosolic acetyl-CoA, which is mainly used for the biosynthesis of fatty acids and sterols. In Schizosaccharomyces pombe (strain 972 / ATCC 24843) (Fission yeast), this protein is Probable ATP-citrate synthase subunit 1.